Reading from the N-terminus, the 105-residue chain is Thioredoxin (105 aa).

Positions 2-105 (VKIVGDLTEF…KLEEAIKKYM (104 aa)) constitute a Thioredoxin domain. Active-site nucleophile residues include C32 and C35. A disulfide bond links C32 and C35. S-nitrosocysteine is present on residues C69 and C73.

The protein belongs to the thioredoxin family. Post-translationally, may be nitrosylated on several cysteine residues, depending on the oxidation state. Nitrosylated Cys-73 may serve as donor for nitrosylation of target proteins.

The protein localises to the nucleus. It is found in the cytoplasm. The protein resides in the secreted. In terms of biological role, participates in various redox reactions through the reversible oxidation of its active center dithiol to a disulfide and catalyzes dithiol-disulfide exchange reactions. Plays a role in the reversible S-nitrosylation of cysteine residues in target proteins, and thereby contributes to the response to intracellular nitric oxide. Nitrosylates the active site Cys of CASP3 in response to nitric oxide (NO), and thereby inhibits caspase-3 activity. Induces the FOS/JUN AP-1 DNA binding activity in ionizing radiation (IR) cells through its oxidation/reduction status and stimulates AP-1 transcriptional activity. This Ophiophagus hannah (King cobra) protein is Thioredoxin (TXN).